The chain runs to 71 residues: Phosphatidylinositol N-acetylglucosaminyltransferase subunit Y (71 aa).

At 1–5 the chain is on the cytoplasmic side; that stretch reads MIRSL. A helical transmembrane segment spans residues 6-26; the sequence is PTMTVLIPLVSLAGLLYSASV. Residues 27 to 44 are Lumenal-facing; the sequence is EEGFPEGCTSASSLCFYS. A helical membrane pass occupies residues 45 to 65; that stretch reads LLLPVTVPVYVFFHLWTWMGL. The Cytoplasmic portion of the chain corresponds to 66–71; that stretch reads KLFRHN.

In terms of assembly, component of the glycosylphosphatidylinositol-N-acetylglucosaminyltransferase (GPI-GnT) complex composed at least by PIGA, PIGC, PIGH, PIGP, PIGQ, PIGY and DPM2. Interacts directly with PIGA; this interaction regulates glycosylphosphatidylinositol-N-acetylglucosaminyltransferase activity. Does not interact with Ras proteins.

Its subcellular location is the endoplasmic reticulum membrane. Its pathway is glycolipid biosynthesis; glycosylphosphatidylinositol-anchor biosynthesis. Part of the glycosylphosphatidylinositol-N-acetylglucosaminyltransferase (GPI-GnT) complex that catalyzes the transfer of N-acetylglucosamine from UDP-N-acetylglucosamine to phosphatidylinositol and participates in the first step of GPI biosynthesis. May act by regulating the catalytic subunit PIGA. This is Phosphatidylinositol N-acetylglucosaminyltransferase subunit Y from Mus musculus (Mouse).